The following is a 505-amino-acid chain: L-carnitine/gamma-butyrobetaine antiporter (505 aa).

The next 12 helical transmembrane spans lie at 10–30, 50–70, 92–112, 143–163, 195–215, 231–251, 263–283, 316–336, 347–367, 403–423, 446–466, and 475–495; these read IEPKVFFPPLIIVGILCWLTV, IWGWAFEWYMVVMLFGWFWLV, IFMMFASCTSAAVLFWGSIEI, GPLPWATYSFLSVAFAYFFFV, FYLVALIFAMGTSLGLATPLV, LDAIIITCWIVLNAICVACGL, SYLSFLMLGWVFIVSGASFIM, WTVFYWAWWVIYAIQMSIFLA, LCFGMVLGLTASTWILWTVLG, FSTATMWGFFILCFIATVTLI, LLVRIGWSVLVGVIGIVLLAL, and AIIAGGCPLFFVNIMVTLSFI.

Belongs to the BCCT transporter (TC 2.A.15) family. CaiT subfamily. In terms of assembly, homotrimer.

Its subcellular location is the cell inner membrane. It catalyses the reaction 4-(trimethylamino)butanoate(in) + (R)-carnitine(out) = 4-(trimethylamino)butanoate(out) + (R)-carnitine(in). It functions in the pathway amine and polyamine metabolism; carnitine metabolism. Its function is as follows. Catalyzes the exchange of L-carnitine for gamma-butyrobetaine. The polypeptide is L-carnitine/gamma-butyrobetaine antiporter (Citrobacter koseri (strain ATCC BAA-895 / CDC 4225-83 / SGSC4696)).